The following is a 506-amino-acid chain: Transcription factor CP2 (506 aa).

The Grh/CP2 DB domain maps to 61-300 (ENKILPFQYV…SPGFNSSHNS (240 aa)). The DNA-binding stretch occupies residues 133–395 (EHQQLEGWRW…LFNALKGRIV (263 aa)). Disordered stretches follow at residues 238 to 268 (FKPK…YQPS) and 291 to 316 (SPGF…QPEP). The span at 241–265 (KGADRKQKTDREKMEKRTPQEKEKY) shows a compositional bias: basic and acidic residues. Positions 291–300 (SPGFNSSHNS) are enriched in polar residues.

The protein belongs to the grh/CP2 family. CP2 subfamily. Component of the SSP (stage selector protein) complex, which appears to be a heteromer of TFCP2 and 2 copies of NFE4.

It is found in the nucleus. In terms of biological role, may function as a transcription factor. The chain is Transcription factor CP2 (tfcp2) from Xenopus laevis (African clawed frog).